The following is a 537-amino-acid chain: Atrial natriuretic peptide receptor 3 (537 aa).

Residues 1-20 form the signal peptide; that stretch reads MPSLLVLTFSACVLLGWALL. Positions 21–41 are excised as a propeptide; the sequence is ADCTGGGGSGGAGPGRGRRER. Topologically, residues 42–477 are extracellular; it reads EALPPQKIEV…PCKASGGLEE (436 aa). A glycan (N-linked (GlcNAc...) asparagine) is linked at Asn82. Disulfide bonds link Cys104–Cys132 and Cys209–Cys257. Asn289 and Asn390 each carry an N-linked (GlcNAc...) asparagine glycan. A helical transmembrane segment spans residues 478–500; the sequence is SAVTGIVVGALLGAGLLMAFYFF. Topologically, residues 501–537 are cytoplasmic; the sequence is RKKYRITIERRNQQEESNVGKHRELREDSIRSHFSVA.

The protein belongs to the ANF receptor family. In terms of assembly, homodimer; disulfide-linked. Interacts with OSTN.

It localises to the cell membrane. Its function is as follows. Receptor for the natriuretic peptide hormones, binding with similar affinities atrial natriuretic peptide NPPA/ANP, brain natriuretic peptide NPPB/BNP, and C-type natriuretic peptide NPPC/CNP. May function as a clearance receptor for NPPA, NPPB and NPPC, regulating their local concentrations and effects. Acts as a regulator of osteoblast differentiation and bone growth by binding to its ligand osteocrin, thereby preventing binding between NPR3/NPR-C and natriuretic peptides, leading to increase cGMP production. This is Atrial natriuretic peptide receptor 3 (NPR3) from Bos taurus (Bovine).